The sequence spans 356 residues: Glutamine synthetase PR-2 (356 aa).

The region spanning 19–99 is the GS beta-grasp domain; sequence IIAEYIWVGG…VICDVYTPAG (81 aa). Residues 37-66 are disordered; sequence ARTLPGPVDDPAKLPKWNYDGSSTDQAPGD. Residues 106-356 enclose the GS catalytic domain; it reads KRYDAAKIFS…IAETTILWKP (251 aa).

It belongs to the glutamine synthetase family. In terms of assembly, homooctamer. Roots.

It localises to the cytoplasm. The catalysed reaction is L-glutamate + NH4(+) + ATP = L-glutamine + ADP + phosphate + H(+). The sequence is that of Glutamine synthetase PR-2 from Phaseolus vulgaris (Kidney bean).